The sequence spans 121 residues: Large ribosomal subunit protein uL18 (121 aa).

Belongs to the universal ribosomal protein uL18 family. In terms of assembly, part of the 50S ribosomal subunit; part of the 5S rRNA/L5/L18/L25 subcomplex. Contacts the 5S and 23S rRNAs.

This is one of the proteins that bind and probably mediate the attachment of the 5S RNA into the large ribosomal subunit, where it forms part of the central protuberance. In Polaromonas naphthalenivorans (strain CJ2), this protein is Large ribosomal subunit protein uL18.